A 295-amino-acid polypeptide reads, in one-letter code: Protein NEOXANTHIN-DEFICIENT 1 (295 aa).

Residues 221 to 251 (PAKVSGPSESDADKENSSEDQSSNVESVSRV) form a disordered region.

Its function is as follows. Required for neoxanthin biosynthesis. Probably not involved directly in the enzymatic conversion of violaxanthin to neoxanthin. Is necessary but not sufficient for neoxanthin synthesis. Seems not required for abscisic acid (ABA) biosynthesis in response to drought stress. This chain is Protein NEOXANTHIN-DEFICIENT 1, found in Solanum lycopersicum (Tomato).